The following is a 339-amino-acid chain: Heat-inducible transcription repressor HrcA (339 aa).

Belongs to the HrcA family.

In terms of biological role, negative regulator of class I heat shock genes (grpE-dnaK-dnaJ and groELS operons). Prevents heat-shock induction of these operons. This chain is Heat-inducible transcription repressor HrcA, found in Clostridium perfringens (strain 13 / Type A).